Here is a 419-residue protein sequence, read N- to C-terminus: L-rhamnose isomerase (419 aa).

Residues H262, D294, and D296 each contribute to the Mn(2+) site.

The protein belongs to the rhamnose isomerase family. In terms of assembly, homotetramer. Mn(2+) is required as a cofactor.

It is found in the cytoplasm. The enzyme catalyses L-rhamnopyranose = L-rhamnulose. The protein operates within carbohydrate degradation; L-rhamnose degradation; glycerone phosphate from L-rhamnose: step 1/3. Catalyzes the interconversion of L-rhamnose and L-rhamnulose. This is L-rhamnose isomerase from Escherichia coli (strain 55989 / EAEC).